Reading from the N-terminus, the 350-residue chain is Thymidine kinase (350 aa).

Position 15–22 (15–22) interacts with ATP; sequence GAHGLGKT. Glu44 functions as the Proton acceptor in the catalytic mechanism. Residue Gln88 participates in substrate binding. Arg178 contacts ATP. Arg184 contacts substrate.

Belongs to the herpesviridae thymidine kinase family. Homodimer.

It catalyses the reaction thymidine + ATP = dTMP + ADP + H(+). Its function is as follows. Catalyzes the transfer of the gamma-phospho group of ATP to thymidine to generate dTMP in the salvage pathway of pyrimidine synthesis. The dTMP serves as a substrate for DNA polymerase during viral DNA replication. Allows the virus to be reactivated and to grow in non-proliferative cells lacking a high concentration of phosphorylated nucleic acid precursors. This is Thymidine kinase from Bos taurus (Bovine).